Reading from the N-terminus, the 477-residue chain is Pentatricopeptide repeat-containing protein At4g14170 (477 aa).

PPR repeat units follow at residues 65 to 96 (NVVL…MPYR), 97 to 131 (NIFS…SCVR), 133 to 167 (DDFT…GFSS), 168 to 198 (SLFV…MPVR), 199 to 233 (DSVL…GFAL), 234 to 264 (DSVV…CIRR), 269 to 299 (GLNL…MSRR), 300 to 334 (DVIS…GIEP), 335 to 369 (NAVT…NIVP), and 370 to 400 (ELKH…MPVK). Residues 405–477 (VMGAVLSGCK…ISKVPGCSSI (73 aa)) form a type E motif; degenerate region.

Belongs to the PPR family. PCMP-E subfamily.

The sequence is that of Pentatricopeptide repeat-containing protein At4g14170 (PCMP-E17) from Arabidopsis thaliana (Mouse-ear cress).